Here is a 346-residue protein sequence, read N- to C-terminus: UPF0425 pyridoxal phosphate-dependent protein MK0620 (346 aa).

Position 206 is an N6-(pyridoxal phosphate)lysine (K206).

It depends on pyridoxal 5'-phosphate as a cofactor.

The sequence is that of UPF0425 pyridoxal phosphate-dependent protein MK0620 from Methanopyrus kandleri (strain AV19 / DSM 6324 / JCM 9639 / NBRC 100938).